We begin with the raw amino-acid sequence, 515 residues long: Pescadillo homolog (515 aa).

The stretch at 270 to 327 (EVLAALNHTLKIIQTQEEDLEVDEFPIDPNSEDAEAIQAQKEEETKLERLKNLFSECK) forms a coiled coil. The 94-residue stretch at 318 to 411 (RLKNLFSECK…KLLPVEEYFP (94 aa)) folds into the BRCT domain. The segment at 477-515 (RLYEKIMHSKKKKRSEVRKLESKRKVHDEEKAKKKLKSS) is disordered. Over residues 484 to 501 (HSKKKKRSEVRKLESKRK) the composition is skewed to basic residues.

Belongs to the pescadillo family.

It is found in the nucleus. The protein localises to the nucleolus. The protein resides in the nucleoplasm. Required for maturation of ribosomal RNAs and formation of the large ribosomal subunit. The chain is Pescadillo homolog from Nematostella vectensis (Starlet sea anemone).